Consider the following 93-residue polypeptide: Beta-defensin 128 (93 aa).

A signal peptide spans 1 to 18 (MKLFLVLIILLFEVLTDG). Cystine bridges form between Cys24–Cys52, Cys32–Cys46, and Cys36–Cys53.

It belongs to the beta-defensin family.

Its subcellular location is the secreted. In terms of biological role, has antibacterial activity. This chain is Beta-defensin 128 (DEFB128), found in Homo sapiens (Human).